Reading from the N-terminus, the 107-residue chain is Integration host factor subunit beta (107 aa).

Residues arginine 56–leucine 107 are disordered. Over residues lysine 65–leucine 107 the composition is skewed to basic and acidic residues.

It belongs to the bacterial histone-like protein family. In terms of assembly, heterodimer of an alpha and a beta chain.

In terms of biological role, this protein is one of the two subunits of integration host factor, a specific DNA-binding protein that functions in genetic recombination as well as in transcriptional and translational control. The sequence is that of Integration host factor subunit beta from Paraburkholderia phymatum (strain DSM 17167 / CIP 108236 / LMG 21445 / STM815) (Burkholderia phymatum).